Here is a 145-residue protein sequence, read N- to C-terminus: Aklanonic acid methyl ester cyclase DnrD (145 aa).

Q106 serves as a coordination point for substrate.

It belongs to the polyketide cyclase DnrD family. In terms of assembly, homotetramer.

The catalysed reaction is methyl aklanonate = aklaviketone. Its pathway is antibiotic biosynthesis; daunorubicin biosynthesis. It functions in the pathway antibiotic biosynthesis; carminomycin biosynthesis. The protein operates within antibiotic biosynthesis; rhodomycin biosynthesis. It participates in antibiotic biosynthesis; aclacinomycin biosynthesis. Functionally, involved in the biosynthesis of aklavinone which is an important precursor common to the formation of the clinically significant anthracyclines such as carminomycin, daunorubicin (daunomycin), rhodomycin, aclacinomycin T (aklavin) and aclacinomycin A (aclarubicin). These compounds are aromatic polyketide antibiotics that exhibit high cytotoxicity and are widely applied in the chemotherapy of a variety of cancers. Catalyzes the cyclization of aklanonic acid methyl ester to yield aklaviketone presumably via an intramolecular aldol condensation mechanism, although water is not eliminated. The chain is Aklanonic acid methyl ester cyclase DnrD (dnrD) from Streptomyces peucetius.